A 218-amino-acid polypeptide reads, in one-letter code: Glutathione S-transferase Mu 7 (218 aa).

The GST N-terminal domain maps to 2–88; sequence PMTLGYWDIR…YLGRKHNLCG (87 aa). Glutathione contacts are provided by residues 7-8, 46-50, 59-60, and 72-73; these read YW, WLNEK, NL, and QS. The GST C-terminal domain maps to 90 to 208; the sequence is TEEERIRVDI…KSSRFLPRPL (119 aa). Tyrosine 116 is a substrate binding site.

The protein belongs to the GST superfamily. Mu family. As to quaternary structure, homodimer.

Its subcellular location is the cytoplasm. It carries out the reaction RX + glutathione = an S-substituted glutathione + a halide anion + H(+). In terms of biological role, conjugation of reduced glutathione to a wide number of exogenous and endogenous hydrophobic electrophiles. The chain is Glutathione S-transferase Mu 7 from Rattus norvegicus (Rat).